Reading from the N-terminus, the 154-residue chain is Egg-lysin (154 aa).

The signal sequence occupies residues 1–18; it reads MKLLVLCIFAMMATLAMS.

In terms of assembly, monomer. Homodimer. Molecules associate into dimers and then rapidly dissociate again. Interacts (as a monomer) with the egg vitelline layer protein VERL (via VERL repeats); each VERL chain can bind multiple copies of lysin. Sperm (at protein level).

The protein localises to the cytoplasmic vesicle. It localises to the secretory vesicle. Its subcellular location is the acrosome lumen. Its function is as follows. Creates a 3 um hole in the egg vitelline layer through which the sperm passes. Does not have enzyme activity. Species-specific interaction between the sperm protein lysin and the egg protein VERL exposes a basic surface on lysin that may dissociate the egg vitelline layer via electrostatic repulsion. Plays a role in ensuring species-specific fertilization. In Haliotis rufescens (California red abalone), this protein is Egg-lysin.